We begin with the raw amino-acid sequence, 336 residues long: Eukaryotic translation initiation factor 3 subunit H (336 aa).

The region spanning 21-154 is the MPN domain; the sequence is VQCDGLAAMK…LKAYRLTPQA (134 aa).

This sequence belongs to the eIF-3 subunit H family. In terms of assembly, component of the eukaryotic translation initiation factor 3 (eIF-3) complex.

Its subcellular location is the cytoplasm. Component of the eukaryotic translation initiation factor 3 (eIF-3) complex, which is involved in protein synthesis of a specialized repertoire of mRNAs and, together with other initiation factors, stimulates binding of mRNA and methionyl-tRNAi to the 40S ribosome. The eIF-3 complex specifically targets and initiates translation of a subset of mRNAs involved in cell proliferation. This Aedes aegypti (Yellowfever mosquito) protein is Eukaryotic translation initiation factor 3 subunit H.